The chain runs to 218 residues: Serine/threonine-protein phosphatase 2 (218 aa).

Mn(2+) is bound by residues Asp-22, His-24, Asp-51, and Asn-77. The active-site Proton donor is the His-78. His-187 serves as a coordination point for Mn(2+).

The protein belongs to the PPP phosphatase family. Requires Mn(2+) as cofactor.

It carries out the reaction O-phospho-L-seryl-[protein] + H2O = L-seryl-[protein] + phosphate. The enzyme catalyses O-phospho-L-threonyl-[protein] + H2O = L-threonyl-[protein] + phosphate. Its function is as follows. Has been shown, in vitro, to act on Ser, Thr and Tyr-phosphorylated substrates. The sequence is that of Serine/threonine-protein phosphatase 2 (pphB) from Escherichia coli (strain K12).